We begin with the raw amino-acid sequence, 299 residues long: MVQRWWEITVTCQAEAEELVYWRLQSFGCQGTATQLQQGRVLIQGYVPQQRVSLLDIAALGVWIEQDVVAQGYLSPKLHWQLVNEQDWAHSWQAYWHPIPVGDRLLICPAWEMPPLDNTRLVIKLDPGMAFGTGTHETTQLCLEALEMQLDQTFEPLPPTVIADIGCGSGILAIASLLLGAQKAYAVDTSDLAVTATQRNAELNGIRADQLIVHQGSWEQVLELVDGVVCNILAPVIIEILPHLPAIVKPKGWGIFSGILLDQADRVAEQLKRQGWSLGSVWRRNEWCCLNARFERLPD.

Thr-139, Gly-166, Asp-188, and Asn-231 together coordinate S-adenosyl-L-methionine.

This sequence belongs to the methyltransferase superfamily. PrmA family.

The protein resides in the cytoplasm. It carries out the reaction L-lysyl-[protein] + 3 S-adenosyl-L-methionine = N(6),N(6),N(6)-trimethyl-L-lysyl-[protein] + 3 S-adenosyl-L-homocysteine + 3 H(+). Its function is as follows. Methylates ribosomal protein L11. This Thermosynechococcus vestitus (strain NIES-2133 / IAM M-273 / BP-1) protein is Ribosomal protein L11 methyltransferase.